Consider the following 2450-residue polypeptide: Tetratricopeptide repeat protein 28 (2450 aa).

M1 bears the N-acetylmethionine mark. The interval 1–36 is disordered; the sequence is MEQPPPLAPEPASARSRRRREPESPPAPIPLFGART. The residue at position 24 (S24) is a Phosphoserine. TPR repeat units follow at residues 52–85, 87–119, 120–153, 190–223, 228–261, 268–301, 308–341, 348–381, 388–421, 428–461, 468–501, 508–541, 548–581, 588–621, 628–661, 668–701, 708–741, 748–781, 788–821, 828–861, 871–904, 911–944, 951–984, 991–1024, 1031–1064, 1071–1104, 1111–1144, and 1163–1196; these read FVEKVRQSNQACHDGDFHTAIVLYNEALAVDPQN, ILYSNRSAAYMKTQQYHKALDDAIKARLLNPKW, PKAYFRQGVALQYLGRHADALAAFASGLAQDPKS, FVVVSVVGQELLTAGHHGASVVVLEAALKIGTCS, GSVFSALSSAHWSLGNTEKSTGYMQQDLDVAKTL, CRAHGNLGSAFFSKGNYREALTNHRHQLVLAMKL, SSALSSLGHVYTAIGDYPNALASHKQCVLLAKQS, ARELGNMGAVYIAMGDFENAVQCHEQHLRIAKDL, ARAYSNLGSAYHYRRNFDKAMSYHNCVLELAQEL, MRAYAGLGHAARCMQDLERAKQYHEQQLGIAEDL, GRASSNLGIIHQMKGDYDTALKLHKTHLCIAQEL, GRAYGNMGNAYNALGMYDQAVKYHRQELQISMEV, ASTHGNLAVAYQALGAHDRALQHYQNHLNIAREL, ARALSNLGNFHCSRGEYVQAAPYYEQYLRLAPDL, GKVCHNLGYAHYCLGNYQEAVKYYEQDLALAKDL, AKAYCNLGLAFKALLNFAKAEECQKYLLSLAQSL, FRALGNLGDIFICKKDINGAIKFYEQQLGLSHHV, ASAYAALGTAYRMVQKYDKALGYHTQELEVYQEL, CRAHGHLAAVYMALGKYTMAFKCYQEQLELGRKL, AQVYGNMGITKMNMNVMEDAIGYFEQQLAMLQQL, GRAYGNLGDCYEALGDYEEAIKYYEQYLSVAQSL, AKAYRGLGNGHRATGSLQQALVCFEKRLVVAHEL, AQAYGELGSLHSQLGNYEQAISCLERQLNIARDM, SDAACGLGGVYQQMGEYDTALQYHQLDLQIAEET, GRAYGNLGLTYESLGTFERAVVYQEQHLSIAAQM, TVSYSSLGRTHHALQNYSQAVMYLQEGLRLAEQL, AKIRHGLGLSLWASGNLEEAQHQLYRASALFETI, and TSSYQALQRVLVSLGHHDEALAVAERGRTRAFAD. Residues 1362 to 1381 form a disordered region; that stretch reads SGTVSPSKDGTSSLPRRQNS. Phosphoserine occurs at positions 1584 and 2098. The tract at residues 2001-2364 is disordered; sequence KPEGGLEGGG…GTLTSKRDVL (364 aa). Residues 2090–2116 are compositionally biased toward polar residues; the sequence is SVSSKGSVSTPNSPVKMTLIPSPNSPF. Residues 2124-2140 are compositionally biased toward low complexity; it reads SSDTGESDQSSTETDST. Positions 2143–2153 are enriched in basic and acidic residues; sequence SQEESTPKLDP. A compositionally biased stretch (polar residues) spans 2191–2206; it reads APSSTTVFRASETSAF. Residue S2216 is modified to Phosphoserine. Over residues 2229–2245 the composition is skewed to polar residues; that stretch reads ARSSSLPKVSSPATSEV. Composition is skewed to low complexity over residues 2252–2262 and 2296–2320; these read SPPGSSHPSPG and SPACSAPSPALSYSSAGSARSSPAD. S2365 and S2370 each carry phosphoserine.

In terms of assembly, interacts with AURKB. Expressed in embryos at all stages examined. In adult tissues, detected in heart and at low levels in kidney and testis.

Its subcellular location is the cytoplasm. The protein resides in the cytoskeleton. It is found in the microtubule organizing center. The protein localises to the centrosome. It localises to the spindle. Its subcellular location is the spindle pole. The protein resides in the midbody. In terms of biological role, during mitosis, may be involved in the condensation of spindle midzone microtubules, leading to the formation of midbody. Functionally, essential for the formation and integrity of the midbody. Max play a critical role in the progress of mitosis and cytokinesis during cell cycle. The sequence is that of Tetratricopeptide repeat protein 28 (Ttc28) from Mus musculus (Mouse).